Here is a 188-residue protein sequence, read N- to C-terminus: UPF0314 protein Sala_3154 (188 aa).

3 consecutive transmembrane segments (helical) span residues 8–28 (TGWLVAAALVALLAAILIFMG), 57–77 (WYSFSHIIHGFIFYGVLRWIM), and 143–163 (MRWWVTAALAIAFELFTLWTI).

This sequence belongs to the UPF0314 family.

The protein localises to the cell membrane. This is UPF0314 protein Sala_3154 from Sphingopyxis alaskensis (strain DSM 13593 / LMG 18877 / RB2256) (Sphingomonas alaskensis).